The sequence spans 450 residues: Phosphoglucosamine mutase (450 aa).

Ser-101 acts as the Phosphoserine intermediate in catalysis. Ser-101, Asp-240, Asp-242, and Asp-244 together coordinate Mg(2+). Ser-101 carries the phosphoserine modification.

This sequence belongs to the phosphohexose mutase family. Mg(2+) is required as a cofactor. In terms of processing, activated by phosphorylation.

It carries out the reaction alpha-D-glucosamine 1-phosphate = D-glucosamine 6-phosphate. In terms of biological role, catalyzes the conversion of glucosamine-6-phosphate to glucosamine-1-phosphate. In Streptococcus agalactiae serotype Ia (strain ATCC 27591 / A909 / CDC SS700), this protein is Phosphoglucosamine mutase.